Reading from the N-terminus, the 247-residue chain is ATP synthase subunit a, chloroplastic (247 aa).

5 consecutive transmembrane segments (helical) span residues 38 to 58 (QVLI…TIAV), 95 to 115 (VPFI…GALL), 134 to 154 (INTT…AGLT), 199 to 219 (LVVV…VMFL), and 220 to 240 (GLFT…AYIG).

The protein belongs to the ATPase A chain family. F-type ATPases have 2 components, CF(1) - the catalytic core - and CF(0) - the membrane proton channel. CF(1) has five subunits: alpha(3), beta(3), gamma(1), delta(1), epsilon(1). CF(0) has four main subunits: a, b, b' and c.

The protein resides in the plastid. The protein localises to the chloroplast thylakoid membrane. In terms of biological role, key component of the proton channel; it plays a direct role in the translocation of protons across the membrane. The chain is ATP synthase subunit a, chloroplastic from Panax ginseng (Korean ginseng).